A 96-amino-acid chain; its full sequence is UPF0235 protein VC0395_A0010/VC395_0502 (96 aa).

The protein belongs to the UPF0235 family.

The protein is UPF0235 protein VC0395_A0010/VC395_0502 of Vibrio cholerae serotype O1 (strain ATCC 39541 / Classical Ogawa 395 / O395).